A 78-amino-acid polypeptide reads, in one-letter code: Translation initiation factor IF-1 (78 aa).

Positions 2 to 78 (SKNNLNETES…TQARITYRFK (77 aa)) constitute an S1-like domain.

Belongs to the IF-1 family. As to quaternary structure, component of the 30S ribosomal translation pre-initiation complex which assembles on the 30S ribosome in the order IF-2 and IF-3, IF-1 and N-formylmethionyl-tRNA(fMet); mRNA recruitment can occur at any time during PIC assembly.

It localises to the cytoplasm. Functionally, one of the essential components for the initiation of protein synthesis. Stabilizes the binding of IF-2 and IF-3 on the 30S subunit to which N-formylmethionyl-tRNA(fMet) subsequently binds. Helps modulate mRNA selection, yielding the 30S pre-initiation complex (PIC). Upon addition of the 50S ribosomal subunit IF-1, IF-2 and IF-3 are released leaving the mature 70S translation initiation complex. In Aster yellows witches'-broom phytoplasma (strain AYWB), this protein is Translation initiation factor IF-1.